The primary structure comprises 250 residues: NADH-quinone oxidoreductase subunit B 2 (250 aa).

The [4Fe-4S] cluster site is built by Cys-41, Cys-42, Cys-107, and Cys-137.

The protein belongs to the complex I 20 kDa subunit family. In terms of assembly, NDH-1 is composed of 14 different subunits. Subunits NuoB, C, D, E, F, and G constitute the peripheral sector of the complex. [4Fe-4S] cluster is required as a cofactor.

Its subcellular location is the cell membrane. The enzyme catalyses a quinone + NADH + 5 H(+)(in) = a quinol + NAD(+) + 4 H(+)(out). In terms of biological role, NDH-1 shuttles electrons from NADH, via FMN and iron-sulfur (Fe-S) centers, to quinones in the respiratory chain. The immediate electron acceptor for the enzyme in this species is believed to be ubiquinone. Couples the redox reaction to proton translocation (for every two electrons transferred, four hydrogen ions are translocated across the cytoplasmic membrane), and thus conserves the redox energy in a proton gradient. This is NADH-quinone oxidoreductase subunit B 2 from Herpetosiphon aurantiacus (strain ATCC 23779 / DSM 785 / 114-95).